Consider the following 474-residue polypeptide: tRNA-2-methylthio-N(6)-dimethylallyladenosine synthase (474 aa).

In terms of domain architecture, MTTase N-terminal spans 3–120 (QKLHIKTWGC…LPEMINQIRG (118 aa)). Residues cysteine 12, cysteine 49, cysteine 83, cysteine 157, cysteine 161, and cysteine 164 each contribute to the [4Fe-4S] cluster site. The Radical SAM core domain maps to 143–375 (RAEGPTAFVS…QQRINNQAAQ (233 aa)). Residues 378–441 (RAMLGTEQRV…TNSLRGEVVR (64 aa)) form the TRAM domain.

This sequence belongs to the methylthiotransferase family. MiaB subfamily. In terms of assembly, monomer. The cofactor is [4Fe-4S] cluster.

Its subcellular location is the cytoplasm. It catalyses the reaction N(6)-dimethylallyladenosine(37) in tRNA + (sulfur carrier)-SH + AH2 + 2 S-adenosyl-L-methionine = 2-methylsulfanyl-N(6)-dimethylallyladenosine(37) in tRNA + (sulfur carrier)-H + 5'-deoxyadenosine + L-methionine + A + S-adenosyl-L-homocysteine + 2 H(+). In terms of biological role, catalyzes the methylthiolation of N6-(dimethylallyl)adenosine (i(6)A), leading to the formation of 2-methylthio-N6-(dimethylallyl)adenosine (ms(2)i(6)A) at position 37 in tRNAs that read codons beginning with uridine. The sequence is that of tRNA-2-methylthio-N(6)-dimethylallyladenosine synthase from Pasteurella multocida (strain Pm70).